Here is an 80-residue protein sequence, read N- to C-terminus: DinI-like protein Z2083/ECs2153 (80 aa).

This is DinI-like protein Z2083/ECs2153 from Escherichia coli O157:H7.